The following is a 561-amino-acid chain: Arf-GAP domain and FG repeat-containing protein 1 (561 aa).

The 125-residue stretch at 11–135 (EKHLKMLRDM…WYVPPEQAKV (125 aa)) folds into the Arf-GAP domain. The C4-type zinc-finger motif lies at 29 to 52 (CFDCDQRGPTYVNMTVGSFVCTSC). Ser167 is modified (phosphoserine). The interval 171 to 193 (LHLNKGTPTQSPVVGRSQGQQQE) is disordered. A compositionally biased stretch (polar residues) spans 176–191 (GTPTQSPVVGRSQGQQ). Thr177 carries the phosphothreonine modification. Phosphoserine is present on residues Ser181 and Ser362. O-linked (GlcNAc) serine glycosylation occurs at Ser367. The segment at 409-451 (PVGASPQTQPASSGPAPFGATPSTNPFVAATGPSAASSTNPFQ) is disordered. The segment covering 442–451 (SAASSTNPFQ) has biased composition (polar residues).

In terms of assembly, interacts with EPS15R and EPS15. Interacts with FCHO1. Post-translationally, O-glycosylated.

It is found in the nucleus. The protein localises to the cytoplasmic vesicle. Its function is as follows. Required for vesicle docking or fusion during acrosome biogenesis. May play a role in RNA trafficking or localization. The chain is Arf-GAP domain and FG repeat-containing protein 1 (Agfg1) from Rattus norvegicus (Rat).